A 165-amino-acid chain; its full sequence is SsrA-binding protein (165 aa).

The protein belongs to the SmpB family.

Its subcellular location is the cytoplasm. Its function is as follows. Required for rescue of stalled ribosomes mediated by trans-translation. Binds to transfer-messenger RNA (tmRNA), required for stable association of tmRNA with ribosomes. tmRNA and SmpB together mimic tRNA shape, replacing the anticodon stem-loop with SmpB. tmRNA is encoded by the ssrA gene; the 2 termini fold to resemble tRNA(Ala) and it encodes a 'tag peptide', a short internal open reading frame. During trans-translation Ala-aminoacylated tmRNA acts like a tRNA, entering the A-site of stalled ribosomes, displacing the stalled mRNA. The ribosome then switches to translate the ORF on the tmRNA; the nascent peptide is terminated with the 'tag peptide' encoded by the tmRNA and targeted for degradation. The ribosome is freed to recommence translation, which seems to be the essential function of trans-translation. The polypeptide is SsrA-binding protein (Prochlorococcus marinus (strain MIT 9515)).